Here is a 476-residue protein sequence, read N- to C-terminus: Methylenetetrahydrofolate--tRNA-(uracil-5-)-methyltransferase TrmFO (476 aa).

14 to 19 (GGGLAG) provides a ligand contact to FAD. A disordered region spans residues 428–447 (LTEPPTHGADGKKLRGPEKS). Over residues 436 to 447 (ADGKKLRGPEKS) the composition is skewed to basic and acidic residues.

This sequence belongs to the MnmG family. TrmFO subfamily. Requires FAD as cofactor.

The protein resides in the cytoplasm. It carries out the reaction uridine(54) in tRNA + (6R)-5,10-methylene-5,6,7,8-tetrahydrofolate + NADH + H(+) = 5-methyluridine(54) in tRNA + (6S)-5,6,7,8-tetrahydrofolate + NAD(+). The catalysed reaction is uridine(54) in tRNA + (6R)-5,10-methylene-5,6,7,8-tetrahydrofolate + NADPH + H(+) = 5-methyluridine(54) in tRNA + (6S)-5,6,7,8-tetrahydrofolate + NADP(+). Its function is as follows. Catalyzes the folate-dependent formation of 5-methyl-uridine at position 54 (M-5-U54) in all tRNAs. This chain is Methylenetetrahydrofolate--tRNA-(uracil-5-)-methyltransferase TrmFO, found in Rhodopseudomonas palustris (strain BisA53).